Consider the following 222-residue polypeptide: Cytidylate kinase (222 aa).

G10–S18 contacts ATP.

It belongs to the cytidylate kinase family. Type 1 subfamily.

It localises to the cytoplasm. The enzyme catalyses CMP + ATP = CDP + ADP. It catalyses the reaction dCMP + ATP = dCDP + ADP. The sequence is that of Cytidylate kinase from Acholeplasma laidlawii (strain PG-8A).